The primary structure comprises 125 residues: uncharacterized protein (125 aa).

A helical transmembrane segment spans residues 21–43 (KFSLIALVSFTALAIIVLYHNIS).

The protein resides in the membrane. This is an uncharacterized protein from Archaeoglobus fulgidus (strain ATCC 49558 / DSM 4304 / JCM 9628 / NBRC 100126 / VC-16).